Reading from the N-terminus, the 345-residue chain is Peptidoglycan-recognition protein LE (345 aa).

A compositionally biased stretch (basic and acidic residues) spans 1 to 16 (MSESGIKKLSQERTRE). The interval 1-38 (MSESGIKKLSQERTREWLASQEDEELESIAESSVVDSL) is disordered. 4 N-linked (GlcNAc...) asparagine glycosylation sites follow: asparagine 52, asparagine 95, asparagine 98, and asparagine 106. A disordered region spans residues 124-152 (NRRDRRHVSPPRDNAPKTPTHFEDDYQDE). The 127-residue stretch at 198–324 (PVKYVVILHT…CQCNSTESPG (127 aa)) folds into the N-acetylmuramoyl-L-alanine amidase domain. Residues histidine 206, 229-240 (HIESRGWNDIAY), arginine 254, 261-267 (AHTLGYN), and 314-322 (HCQCNSTES) each bind peptidoglycan. N-linked (GlcNAc...) asparagine glycosylation is present at asparagine 318.

Belongs to the N-acetylmuramoyl-L-alanine amidase 2 family. In terms of assembly, monomer. Peptidoglycan binding induces oligomerization. In terms of tissue distribution, expressed in hemolymph. Localizes at the lumenal surface of the trachea (at protein level).

It is found in the secreted. Functionally, peptidoglycan-recognition protein that plays a key role in innate immunity by binding to murein peptidoglycans (PGN) of Gram-negative bacteria and activating the imd/Relish pathway. Has no activity against on Gram-positive bacteria. Binds to diaminopimelic acid-type PGN (DAP-type PGN), an activator of the imd/Relish pathway. Functions synergistically with PGRP-LC in producing resistance to E.coli and B.megaterium infections, which have the DAP-type peptidoglycan. Acts both upstream and in parallel with PGRP-LC in the imd/Relish pathway, and is required for infection-dependent activation of melanization. Required for Relish processing and nuclear translocation following proteolytic cleavage. Its localization suggests a role in the recognition and subsequent activation of the signaling at the first point of contact with invading bacteria. In Drosophila melanogaster (Fruit fly), this protein is Peptidoglycan-recognition protein LE (PGRP-LE).